A 196-amino-acid polypeptide reads, in one-letter code: Peptidyl-tRNA hydrolase (196 aa).

Tyr18 contributes to the tRNA binding site. His23 functions as the Proton acceptor in the catalytic mechanism. The tRNA site is built by Phe69, Asn71, and Asn117.

Belongs to the PTH family. In terms of assembly, monomer.

Its subcellular location is the cytoplasm. The catalysed reaction is an N-acyl-L-alpha-aminoacyl-tRNA + H2O = an N-acyl-L-amino acid + a tRNA + H(+). Functionally, hydrolyzes ribosome-free peptidyl-tRNAs (with 1 or more amino acids incorporated), which drop off the ribosome during protein synthesis, or as a result of ribosome stalling. Its function is as follows. Catalyzes the release of premature peptidyl moieties from peptidyl-tRNA molecules trapped in stalled 50S ribosomal subunits, and thus maintains levels of free tRNAs and 50S ribosomes. The chain is Peptidyl-tRNA hydrolase from Vibrio vulnificus (strain CMCP6).